The sequence spans 157 residues: Nuclear cap-binding protein subunit 2 (157 aa).

Residues tyrosine 17, tyrosine 40, 109 to 113, 120 to 124, and 130 to 131 contribute to the mRNA site; these read RADWD, RQYGR, and QV. Residues 37-115 enclose the RRM domain; it reads CTLYVGNLSY…RVIRADWDAG (79 aa).

It belongs to the RRM NCBP2 family. As to quaternary structure, component of the nuclear cap-binding complex (CBC), a heterodimer composed of ncbp-1 and ncbp-2 that interacts with m7GpppG-capped RNA.

It is found in the nucleus. Component of the cap-binding complex (CBC), which binds co-transcriptionally to the 5' cap of pre-mRNAs and is involved in various processes such as pre-mRNA splicing and RNA-mediated gene silencing (RNAi). The CBC complex is involved in miRNA-mediated RNA interference and is required for primary microRNAs (miRNAs) processing. In the CBC complex, ncbp-2 recognizes and binds capped RNAs (m7GpppG-capped RNA) but requires ncbp-1 to stabilize the movement of its N-terminal loop and lock the CBC into a high affinity cap-binding state with the cap structure. The polypeptide is Nuclear cap-binding protein subunit 2 (ncbp-2) (Caenorhabditis briggsae).